Here is a 541-residue protein sequence, read N- to C-terminus: Exopolysaccharide phosphotransferase SCO6021 (541 aa).

Belongs to the stealth family.

This chain is Exopolysaccharide phosphotransferase SCO6021, found in Streptomyces coelicolor (strain ATCC BAA-471 / A3(2) / M145).